A 256-amino-acid chain; its full sequence is HTH-type transcriptional regulator PrtR (256 aa).

The HTH cro/C1-type domain occupies 16–69 (LKQAMAMRNLKQETLAEAAGVSQNTIHKLTSGKAQSTRKLIEIAAALGVSPVWL). The H-T-H motif DNA-binding region spans 27–46 (QETLAEAAGVSQNTIHKLTS).

In terms of biological role, represses the promoter activity of the prtN gene. The protein is HTH-type transcriptional regulator PrtR (prtR) of Pseudomonas aeruginosa (strain ATCC 15692 / DSM 22644 / CIP 104116 / JCM 14847 / LMG 12228 / 1C / PRS 101 / PAO1).